Consider the following 966-residue polypeptide: Calsyntenin-2 (966 aa).

Residues 1-20 (MLPGRLCLVPLLLALGVGSG) form the signal peptide. Residues 21–835 (GGSGDGGDSR…SIQRSSVVPS (815 aa)) lie on the Extracellular side of the membrane. Cadherin domains follow at residues 46 to 162 (IETS…APTF) and 163 to 282 (KEPA…MPLF). N-linked (GlcNAc...) asparagine glycosylation is found at Asn-58 and Asn-100. N-linked (GlcNAc...) asparagine glycosylation is found at Asn-344, Asn-376, Asn-720, and Asn-733. The helical transmembrane segment at 836–856 (IATVVIIISVCMLVFVVAMGV) threads the bilayer. Over 857 to 966 (YRVRIAHQHF…NTAGVINIWK (110 aa)) the chain is Cytoplasmic. Residues 890–966 (NPMEKHEGPG…NTAGVINIWK (77 aa)) are disordered. Over residues 901 to 916 (GEDETTEVEEEEEAEE) the composition is skewed to acidic residues. Residues 943 to 960 (QSGTSSQSPERSTWNTAG) show a composition bias toward polar residues.

This sequence belongs to the calsyntenin family. Proteolytically processed under normal cellular conditions. A primary zeta-cleavage generates a large extracellular (soluble) N-terminal domain (sAlc) and a short C-terminal transmembrane fragment (CTF1). A secondary cleavage catalyzed by gamma-secretase within the transmembrane domain releases the beta-Alc-gamma chain in the extracellular milieu and produces an intracellular fragment (AlcICD). This processing is strongly suppressed in the tripartite complex formed with APBA2 and APP, which seems to prevent the association with PSEN1. As to expression, restricted to the brain. In the cerebral cortex, found in the somas and neuropil of all layers. Expressed at highest levels in neurons of cortical layers 5 and 6 and, at lower levels, in neurons of the upper layers. Highly expressed in Purkinje cells. Also found in a few scattered interneurons throughout the granule cell layer and occasionally in neurons in the molecular layer (at protein level). Present throughout all cortical layers, highest levels in GABAergic neurons (based on morphology and distribution pattern).

It is found in the postsynaptic cell membrane. It localises to the endoplasmic reticulum membrane. Its subcellular location is the golgi apparatus membrane. The protein resides in the cell projection. The protein localises to the dendrite. Functionally, postsynaptic adhesion molecule that binds to presynaptic neurexins to mediate synapse formation, and which is involved in learning and memory. Promotes synapse development by acting as a cell adhesion molecule at the postsynaptic membrane, which associates with neurexin-alpha at the presynaptic membrane. This is Calsyntenin-2 from Mus musculus (Mouse).